Here is a 194-residue protein sequence, read N- to C-terminus: Imidazoleglycerol-phosphate dehydratase (194 aa).

This sequence belongs to the imidazoleglycerol-phosphate dehydratase family.

Its subcellular location is the cytoplasm. It carries out the reaction D-erythro-1-(imidazol-4-yl)glycerol 3-phosphate = 3-(imidazol-4-yl)-2-oxopropyl phosphate + H2O. Its pathway is amino-acid biosynthesis; L-histidine biosynthesis; L-histidine from 5-phospho-alpha-D-ribose 1-diphosphate: step 6/9. This Streptococcus thermophilus (strain ATCC BAA-491 / LMD-9) protein is Imidazoleglycerol-phosphate dehydratase.